We begin with the raw amino-acid sequence, 242 residues long: 1-(5-phosphoribosyl)-5-[(5-phosphoribosylamino)methylideneamino] imidazole-4-carboxamide isomerase (242 aa).

Asp8 serves as the catalytic Proton acceptor. Catalysis depends on Asp129, which acts as the Proton donor.

Belongs to the HisA/HisF family.

It is found in the cytoplasm. It carries out the reaction 1-(5-phospho-beta-D-ribosyl)-5-[(5-phospho-beta-D-ribosylamino)methylideneamino]imidazole-4-carboxamide = 5-[(5-phospho-1-deoxy-D-ribulos-1-ylimino)methylamino]-1-(5-phospho-beta-D-ribosyl)imidazole-4-carboxamide. It participates in amino-acid biosynthesis; L-histidine biosynthesis; L-histidine from 5-phospho-alpha-D-ribose 1-diphosphate: step 4/9. This Syntrophus aciditrophicus (strain SB) protein is 1-(5-phosphoribosyl)-5-[(5-phosphoribosylamino)methylideneamino] imidazole-4-carboxamide isomerase.